The sequence spans 137 residues: Basic phospholipase A2 beta-bungarotoxin A1 chain (137 aa).

An N-terminal signal peptide occupies residues 1–9; sequence AVCVSLLGA. A propeptide spanning residues 10 to 17 is cleaved from the precursor; that stretch reads ANIPPHPL. Intrachain disulfides connect Cys-44–Cys-136, Cys-46–Cys-62, Cys-61–Cys-117, Cys-68–Cys-110, Cys-78–Cys-103, and Cys-96–Cys-108. Tyr-45, Gly-47, and Gly-49 together coordinate Ca(2+). His-65 is a catalytic residue. Asp-66 contributes to the Ca(2+) binding site. Asp-111 is an active-site residue.

The protein belongs to the phospholipase A2 family. Group I subfamily. D49 sub-subfamily. Heterodimer; disulfide-linked. The A chain has phospholipase A2 activity and the B chain shows homology with the basic protease inhibitors. Ca(2+) is required as a cofactor. As to expression, expressed by the venom gland.

The protein resides in the secreted. It carries out the reaction a 1,2-diacyl-sn-glycero-3-phosphocholine + H2O = a 1-acyl-sn-glycero-3-phosphocholine + a fatty acid + H(+). Its function is as follows. Snake venom phospholipase A2 (PLA2) that shows presynaptic neurotoxicity. The A chain has phospholipase activity. PLA2 catalyzes the calcium-dependent hydrolysis of the 2-acyl groups in 3-sn-phosphoglycerides. The sequence is that of Basic phospholipase A2 beta-bungarotoxin A1 chain from Bungarus candidus (Malayan krait).